We begin with the raw amino-acid sequence, 475 residues long: Zinc finger protein 296 (475 aa).

A disordered region spans residues M1 to A78. K35 is covalently cross-linked (Glycyl lysine isopeptide (Lys-Gly) (interchain with G-Cter in SUMO2)). C2H2-type zinc fingers lie at residues L157–H180, P231–H253, and Y259–H281. A disordered region spans residues N275–G385. Composition is skewed to low complexity over residues S295–P313 and G326–A338. Gly residues predominate over residues P339 to T351. Polar residues predominate over residues A354 to Q367. C2H2-type zinc fingers lie at residues G386 to H408, Y414 to H436, and F445 to H468.

Belongs to the krueppel C2H2-type zinc-finger protein family. Interacts with KLF4.

The protein localises to the nucleus. May be a transcriptional corepressor with KLF4. This is Zinc finger protein 296 (ZNF296) from Homo sapiens (Human).